The primary structure comprises 404 residues: Argininosuccinate synthase (404 aa).

Residues 10 to 18 and Ala-38 contribute to the ATP site; that span reads AYSGGVDTS. Tyr-89 is an L-citrulline binding site. Residue Gly-119 coordinates ATP. L-aspartate contacts are provided by Thr-121, Asn-125, and Asp-126. An L-citrulline-binding site is contributed by Asn-125. Arg-129, Ser-177, Ser-186, Glu-262, and Tyr-274 together coordinate L-citrulline.

The protein belongs to the argininosuccinate synthase family. Type 1 subfamily. In terms of assembly, homotetramer.

The protein localises to the cytoplasm. The catalysed reaction is L-citrulline + L-aspartate + ATP = 2-(N(omega)-L-arginino)succinate + AMP + diphosphate + H(+). It functions in the pathway amino-acid biosynthesis; L-arginine biosynthesis; L-arginine from L-ornithine and carbamoyl phosphate: step 2/3. The sequence is that of Argininosuccinate synthase from Prochlorococcus marinus subsp. pastoris (strain CCMP1986 / NIES-2087 / MED4).